The primary structure comprises 142 residues: Large ribosomal subunit protein uL13 (142 aa).

Belongs to the universal ribosomal protein uL13 family. In terms of assembly, part of the 50S ribosomal subunit.

Its function is as follows. This protein is one of the early assembly proteins of the 50S ribosomal subunit, although it is not seen to bind rRNA by itself. It is important during the early stages of 50S assembly. The protein is Large ribosomal subunit protein uL13 of Francisella tularensis subsp. holarctica (strain FTNF002-00 / FTA).